Reading from the N-terminus, the 507-residue chain is MAVCARLCGVGPARGCRRRQQRRGPAETAAADSEADTDPEEERIEAGPARCSLLELPPELLVEIFASLPGTDLPSLAQVCSRFRRILHTDTIWRRRCREEYGVCENLRKLEITGVSCRDVYAKLLHRYRHILGLWQPDIGPYGGLLNVVVDGLFIIGWMYLPPHDPHVGDPMRFKPLFRIHLMERKSATVECMYGHKGPHNGHIQIVKRDEFSTKCNQTDHHRMSGGRQEEFRTWLREEWGRTLEDIFHEHMQELILMKFIYTSQYDNCLTYRRIYLPPSHPDDLIKPGLFKGTYGSHGLEIVMLSFHGSRARGTKITGDPNIPAGQQTVEIDLQRRIQLPDVENLRNFNELSRIVLEVREQVRQEQEAGEGAAPPREPSAKAADGPPAKDGKEPGGGAEAAEQSASSGQGQPFVLPVGVSSRNEDYPRTCRLCFYGTGLIAGHGFTSPERTPGVFVLFDEDRFGFLWLELKSFSLYSRVQATFQNAAAPSPQAFDEMLRNIQSLTS.

The disordered stretch occupies residues 19–42 (RQQRRGPAETAAADSEADTDPEEE). Residue S33 is modified to Phosphoserine. Residues 33 to 42 (SEADTDPEEE) are compositionally biased toward acidic residues. T37 is subject to Phosphothreonine. Positions 50–55 (RCSLLE) match the D box motif. The region spanning 50–96 (RCSLLELPPELLVEIFASLPGTDLPSLAQVCSRFRRILHTDTIWRRR) is the F-box domain. C192, H200, C216, and H222 together coordinate Zn(2+). S264 carries the post-translational modification Phosphoserine; by ATM. The short motif at 283 to 285 (DDL) is the DDL motif element. A disordered region spans residues 366 to 417 (EQEAGEGAAPPREPSAKAADGPPAKDGKEPGGGAEAAEQSASSGQGQPFVLP). Over residues 400–412 (EAAEQSASSGQGQ) the composition is skewed to low complexity. S448 is subject to Phosphoserine.

This sequence belongs to the FBXO31 family. As to quaternary structure, part of a SCF (SKP1-cullin-F-box) protein ligase complex SCF(FBXO31) composed of CUL1, SKP1, RBX1 and FBXO31. Interacts (when phosphorylated at Ser-33) with CDC20, promoting ubiquitination by the APC/C complex. In terms of processing, phosphorylation at Ser-264 by ATM following gamma-irradiation results in its stabilization. Phosphorylation at Ser-448 in absence of stress promotes its ubiquitination and degradation by the SCF(FBXO46) complex. Phosphorylation at Ser-33 by AKT1 promotes association with CDC20 and ubiquitination by the APC/C complex. Post-translationally, ubiquitinated by the SCF(FBXO46) complex in absence of stress, promoting its degradation. Ubiquitinated by the APC/C complex following phosphorylation at Ser-33, leading to its degradation by the proteasome.

The protein resides in the cytoplasm. The protein localises to the cytoskeleton. It is found in the microtubule organizing center. Its subcellular location is the centrosome. It functions in the pathway protein modification; protein ubiquitination. In terms of biological role, substrate-recognition component of the SCF(FBXO31) protein ligase complex, which specifically mediates the ubiquitination of proteins amidated at their C-terminus in response to oxidative stress, leading to their degradation by the proteasome. FBXO31 specifically recognizes and binds C-terminal peptides bearing an amide: C-terminal amidation in response to oxidative stress takes place following protein fragmentation. The SCF(FBXO31) also plays a role in G1 arrest following DNA damage by mediating ubiquitination of phosphorylated cyclin-D1 (CCND1), promoting its degradation by the proteasome, resulting in G1 arrest. The SCF(FBXO31) complex is however not a major regulator of CCND1 stability during the G1/S transition. In response to genotoxic stress, the SCF(FBXO31) complex directs ubiquitination and degradation of phosphorylated MDM2, thereby promoting p53/TP53-mediated DNA damage response. SCF(FBXO31) complex is required for genomic integrity by catalyzing ubiquitination and degradation of cyclin-A (CCNA1 and/or CCNA2) during the G1 phase. In response to genotoxic stress, the SCF(FBXO31) complex directs ubiquitination and degradation of phosphorylated FBXO46 and MAP2K6. SCF(FBXO31) complex promotes ubiquitination and degradation of CDT1 during the G2 phase to prevent re-replication. The SCF(FBXO31) complex also mediates ubiquitination and degradation of DUSP6, OGT and PARD6A. This chain is F-box only protein 31, found in Mus musculus (Mouse).